A 183-amino-acid chain; its full sequence is Ribulose bisphosphate carboxylase small subunit, chloroplastic (183 aa).

Residues 1–59 (MASSMISSGTVATVSADRPAPAQARMVAPFTGLKSSSASPVTRKSNDITSIASNGGRVQ) constitute a chloroplast transit peptide.

This sequence belongs to the RuBisCO small chain family. Heterohexadecamer of 8 large and 8 small subunits.

It localises to the plastid. Its subcellular location is the chloroplast. In terms of biological role, ruBisCO catalyzes two reactions: the carboxylation of D-ribulose 1,5-bisphosphate, the primary event in carbon dioxide fixation, as well as the oxidative fragmentation of the pentose substrate. Both reactions occur simultaneously and in competition at the same active site. Although the small subunit is not catalytic it is essential for maximal activity. This Malus sp. (Crab apple) protein is Ribulose bisphosphate carboxylase small subunit, chloroplastic.